The chain runs to 127 residues: MORF4 family-associated protein 1 (127 aa).

Residues 76 to 97 form a disordered region; that stretch reads ESALNHLQNPDDGAEGRGTKRC. Positions 92–126 form a coiled coil; sequence RGTKRCEKAEEKAKEIAKMAEMLVELVRRIEKSES.

It belongs to the MORF4 family-associated protein family. As to quaternary structure, found in a complex composed of MORF4L1, MRFAP1 and RB1. Interacts via its N-terminus with MORF4L1. Interacts with CSTB and MORF4L2.

The protein resides in the nucleus. Its subcellular location is the cytoplasm. The protein localises to the perinuclear region. The chain is MORF4 family-associated protein 1 from Bos taurus (Bovine).